The following is a 689-amino-acid chain: Methionine--tRNA ligase (689 aa).

The short motif at 16 to 26 (PYANAGLHLGH) is the 'HIGH' region element. The Zn(2+) site is built by Cys147, Cys150, Cys160, and Cys163. Residues 342 to 346 (KMSKS) carry the 'KMSKS' region motif. Lys345 is a binding site for ATP. One can recognise a tRNA-binding domain in the interval 585–689 (DFAKVDLRVG…AGVKPGMRVG (105 aa)).

It belongs to the class-I aminoacyl-tRNA synthetase family. MetG type 1 subfamily. In terms of assembly, homodimer. Requires Zn(2+) as cofactor.

The protein localises to the cytoplasm. It carries out the reaction tRNA(Met) + L-methionine + ATP = L-methionyl-tRNA(Met) + AMP + diphosphate. In terms of biological role, is required not only for elongation of protein synthesis but also for the initiation of all mRNA translation through initiator tRNA(fMet) aminoacylation. The protein is Methionine--tRNA ligase of Chromobacterium violaceum (strain ATCC 12472 / DSM 30191 / JCM 1249 / CCUG 213 / NBRC 12614 / NCIMB 9131 / NCTC 9757 / MK).